The following is a 247-amino-acid chain: MDVISCSSNTLKGLYDISGVEVGQHLYWQIGGLQVHAQVLITSWVVIAILLGSAIIAVRNPQTIPTAGQNFFEYVLEFIRDVSKTQIGEEYGPWVPFIGTMFLFIFVSNWSGALLPWKIIQLPHGELAAPTNDINTTVALALLTSVAYFYAGLTKKGLGYFSKYIQPTPILLPINILEDFTKPLSLSFRLFGNILADELVVVVLVSLVPLVVPIPVMFLGLFTSGIQALIFATLAAAYIGESMEGHH.

A run of 5 helical transmembrane segments spans residues 38-58 (QVLI…IIAV), 95-115 (VPFI…GALL), 134-154 (INTT…AGLT), 199-219 (LVVV…VMFL), and 220-240 (GLFT…AYIG).

The protein belongs to the ATPase A chain family. In terms of assembly, F-type ATPases have 2 components, CF(1) - the catalytic core - and CF(0) - the membrane proton channel. CF(1) has five subunits: alpha(3), beta(3), gamma(1), delta(1), epsilon(1). CF(0) has four main subunits: a, b, b' and c.

Its subcellular location is the plastid. The protein resides in the chloroplast thylakoid membrane. In terms of biological role, key component of the proton channel; it plays a direct role in the translocation of protons across the membrane. This chain is ATP synthase subunit a, chloroplastic, found in Carica papaya (Papaya).